The primary structure comprises 255 residues: Segregation and condensation protein A (255 aa).

The protein belongs to the ScpA family. As to quaternary structure, component of a cohesin-like complex composed of ScpA, ScpB and the Smc homodimer, in which ScpA and ScpB bind to the head domain of Smc. The presence of the three proteins is required for the association of the complex with DNA.

The protein resides in the cytoplasm. Its function is as follows. Participates in chromosomal partition during cell division. May act via the formation of a condensin-like complex containing Smc and ScpB that pull DNA away from mid-cell into both cell halves. This is Segregation and condensation protein A from Lactiplantibacillus plantarum (strain ATCC BAA-793 / NCIMB 8826 / WCFS1) (Lactobacillus plantarum).